The following is a 100-amino-acid chain: Urease subunit gamma (100 aa).

The protein belongs to the urease gamma subunit family. Heterotrimer of UreA (gamma), UreB (beta) and UreC (alpha) subunits. Three heterotrimers associate to form the active enzyme.

The protein resides in the cytoplasm. The catalysed reaction is urea + 2 H2O + H(+) = hydrogencarbonate + 2 NH4(+). It participates in nitrogen metabolism; urea degradation; CO(2) and NH(3) from urea (urease route): step 1/1. This Trichormus variabilis (strain ATCC 29413 / PCC 7937) (Anabaena variabilis) protein is Urease subunit gamma.